Here is a 183-residue protein sequence, read N- to C-terminus: Ribulose bisphosphate carboxylase small subunit, chloroplastic 7 (183 aa).

A chloroplast-targeting transit peptide spans 1–43; sequence MAAAMMNKTVVVGKESVKGGVAPKVAMSRGGFLNSGIMKKDRD.

This sequence belongs to the RuBisCO small chain family. Heterohexadecamer of 8 large and 8 small subunits.

It is found in the plastid. The protein localises to the chloroplast. Its function is as follows. RuBisCO catalyzes two reactions: the carboxylation of D-ribulose 1,5-bisphosphate, the primary event in carbon dioxide fixation, as well as the oxidative fragmentation of the pentose substrate. Both reactions occur simultaneously and in competition at the same active site. Although the small subunit is not catalytic it is essential for maximal activity. The chain is Ribulose bisphosphate carboxylase small subunit, chloroplastic 7 from Acetabularia peniculus (Green alga).